Consider the following 234-residue polypeptide: Leucyl/phenylalanyl-tRNA--protein transferase (234 aa).

The protein belongs to the L/F-transferase family.

Its subcellular location is the cytoplasm. The enzyme catalyses N-terminal L-lysyl-[protein] + L-leucyl-tRNA(Leu) = N-terminal L-leucyl-L-lysyl-[protein] + tRNA(Leu) + H(+). It catalyses the reaction N-terminal L-arginyl-[protein] + L-leucyl-tRNA(Leu) = N-terminal L-leucyl-L-arginyl-[protein] + tRNA(Leu) + H(+). The catalysed reaction is L-phenylalanyl-tRNA(Phe) + an N-terminal L-alpha-aminoacyl-[protein] = an N-terminal L-phenylalanyl-L-alpha-aminoacyl-[protein] + tRNA(Phe). Functionally, functions in the N-end rule pathway of protein degradation where it conjugates Leu, Phe and, less efficiently, Met from aminoacyl-tRNAs to the N-termini of proteins containing an N-terminal arginine or lysine. This Tolumonas auensis (strain DSM 9187 / NBRC 110442 / TA 4) protein is Leucyl/phenylalanyl-tRNA--protein transferase.